The chain runs to 121 residues: Large ribosomal subunit protein uL14c (121 aa).

Belongs to the universal ribosomal protein uL14 family. As to quaternary structure, part of the 50S ribosomal subunit.

It is found in the plastid. The protein resides in the apicoplast. Functionally, binds to 23S rRNA. The chain is Large ribosomal subunit protein uL14c (rpl14) from Eimeria tenella (Coccidian parasite).